Consider the following 117-residue polypeptide: Large ribosomal subunit protein uL18 (117 aa).

The protein belongs to the universal ribosomal protein uL18 family. Part of the 50S ribosomal subunit; part of the 5S rRNA/L5/L18/L25 subcomplex. Contacts the 5S and 23S rRNAs.

In terms of biological role, this is one of the proteins that bind and probably mediate the attachment of the 5S RNA into the large ribosomal subunit, where it forms part of the central protuberance. This chain is Large ribosomal subunit protein uL18, found in Francisella philomiragia subsp. philomiragia (strain ATCC 25017 / CCUG 19701 / FSC 153 / O#319-036).